Here is a 432-residue protein sequence, read N- to C-terminus: UDP-N-acetylmuramoylalanine--D-glutamate ligase (432 aa).

Residue 98–104 (GTNGKST) coordinates ATP.

This sequence belongs to the MurCDEF family.

The protein localises to the cytoplasm. The enzyme catalyses UDP-N-acetyl-alpha-D-muramoyl-L-alanine + D-glutamate + ATP = UDP-N-acetyl-alpha-D-muramoyl-L-alanyl-D-glutamate + ADP + phosphate + H(+). It functions in the pathway cell wall biogenesis; peptidoglycan biosynthesis. Cell wall formation. Catalyzes the addition of glutamate to the nucleotide precursor UDP-N-acetylmuramoyl-L-alanine (UMA). This is UDP-N-acetylmuramoylalanine--D-glutamate ligase from Fusobacterium nucleatum subsp. nucleatum (strain ATCC 25586 / DSM 15643 / BCRC 10681 / CIP 101130 / JCM 8532 / KCTC 2640 / LMG 13131 / VPI 4355).